The sequence spans 133 residues: Fluoride-specific ion channel FluC 3 (133 aa).

A run of 3 helical transmembrane segments spans residues 7–27 (ILVL…SGYV), 37–57 (WGTF…AGLG), and 60–80 (LGAI…LLGG). Residues Gly-79 and Thr-82 each coordinate Na(+). The helical transmembrane segment at 107-127 (IVASALLCVLAVAAGYGGIMW) threads the bilayer.

It belongs to the fluoride channel Fluc/FEX (TC 1.A.43) family.

It is found in the cell inner membrane. It catalyses the reaction fluoride(in) = fluoride(out). With respect to regulation, na(+) is not transported, but it plays an essential structural role and its presence is essential for fluoride channel function. Fluoride-specific ion channel. Important for reducing fluoride concentration in the cell, thus reducing its toxicity. This is Fluoride-specific ion channel FluC 3 from Brucella suis biovar 1 (strain 1330).